A 273-amino-acid polypeptide reads, in one-letter code: 2,3,4,5-tetrahydropyridine-2,6-dicarboxylate N-succinyltransferase (273 aa).

Residues arginine 104 and aspartate 141 each contribute to the substrate site.

The protein belongs to the transferase hexapeptide repeat family. Homotrimer.

The protein localises to the cytoplasm. The catalysed reaction is (S)-2,3,4,5-tetrahydrodipicolinate + succinyl-CoA + H2O = (S)-2-succinylamino-6-oxoheptanedioate + CoA. The protein operates within amino-acid biosynthesis; L-lysine biosynthesis via DAP pathway; LL-2,6-diaminopimelate from (S)-tetrahydrodipicolinate (succinylase route): step 1/3. The polypeptide is 2,3,4,5-tetrahydropyridine-2,6-dicarboxylate N-succinyltransferase (Laribacter hongkongensis (strain HLHK9)).